The following is a 6919-amino-acid chain: Nonribosomal peptide synthetase easA (6919 aa).

In terms of domain architecture, Carrier 1 spans T17–E93. S54 carries the post-translational modification O-(pantetheine 4'-phosphoryl)serine. Positions E123–M427 are epimerization 1. The interval F294–N319 is disordered. Over residues N304–N319 the composition is skewed to basic and acidic residues. Residues L604–L981 form a condensation 1 region. The adenylation 1 stretch occupies residues Q1003–R1394. The 78-residue stretch at E1531–D1608 folds into the Carrier 2 domain. At S1569 the chain carries O-(pantetheine 4'-phosphoryl)serine. Residues L1617–E2031 are epimerization 2. The interval V2072–K2509 is condensation 2. The tract at residues R2541–R2930 is adenylation 2. A Carrier 3 domain is found at A3067–M3143. Position 3104 is an O-(pantetheine 4'-phosphoryl)serine (S3104). A condensation 3 region spans residues E3188–L3599. The segment at Q3620–R4018 is adenylation 3. Positions T4151 to T4228 constitute a Carrier 4 domain. O-(pantetheine 4'-phosphoryl)serine is present on S4188. Residues E4282–V4708 are condensation 4. The tract at residues E4732–R5133 is adenylation 4. The region spanning A5260–E5337 is the Carrier 5 domain. S5296 bears the O-(pantetheine 4'-phosphoryl)serine mark. The interval E5380 to N5775 is condensation 5. The segment at S5824–I6216 is adenylation 5. Residues E6344–T6421 enclose the Carrier 6 domain. S6381 is modified (O-(pantetheine 4'-phosphoryl)serine).

It participates in antibiotic biosynthesis. In terms of biological role, nonribosomal peptide synthetase; part of the gene cluster that mediates the biosynthesis of emericellamides, secondary metabolites acting as antibiotics. The biosynthesis of emericellamides initiates from the highly reducing polyketide synthase easB which catalyzes the formation of the linear polyketide chain. EasB produces several polyketides that can be further processed by the downstream enzymes. The polyketides are released from easB as linear polyketide carboxylic acids, which are converted to CoA thioesters by the acyl-CoA ligase easD. The substrates are then loaded onto the acyltransferase easC, which shuttles them to the first thiolation (T) domain of the nonribosomal peptide synthetase easA. EasA then performs condensation of the polyketides with one glycine, two alanine, one valine and one leucine residues. A last step of cyclization leads to the production of emericellamides. In Emericella nidulans (strain FGSC A4 / ATCC 38163 / CBS 112.46 / NRRL 194 / M139) (Aspergillus nidulans), this protein is Nonribosomal peptide synthetase easA.